The following is a 317-amino-acid chain: 4-diphosphocytidyl-2-C-methyl-D-erythritol kinase (317 aa).

Residue Lys-11 is part of the active site. Residue Pro-99–Thr-109 coordinates ATP. Asp-141 is an active-site residue.

Belongs to the GHMP kinase family. IspE subfamily.

It catalyses the reaction 4-CDP-2-C-methyl-D-erythritol + ATP = 4-CDP-2-C-methyl-D-erythritol 2-phosphate + ADP + H(+). It participates in isoprenoid biosynthesis; isopentenyl diphosphate biosynthesis via DXP pathway; isopentenyl diphosphate from 1-deoxy-D-xylulose 5-phosphate: step 3/6. Catalyzes the phosphorylation of the position 2 hydroxy group of 4-diphosphocytidyl-2C-methyl-D-erythritol. The chain is 4-diphosphocytidyl-2-C-methyl-D-erythritol kinase from Nostoc punctiforme (strain ATCC 29133 / PCC 73102).